The sequence spans 216 residues: Peroxiredoxin (216 aa).

The region spanning 2 to 158 (VVIGEKFPEV…ILRLVKALKI (157 aa)) is the Thioredoxin domain. Cys-46 serves as the catalytic Cysteine sulfenic acid (-SOH) intermediate. Position 121 (Arg-121) interacts with substrate. A disulfide bridge connects residues Cys-205 and Cys-211.

It belongs to the peroxiredoxin family. Prx6 subfamily. Homodecamer. Pentamer of dimers that assemble into a ring structure.

Its subcellular location is the cytoplasm. It catalyses the reaction a hydroperoxide + [thioredoxin]-dithiol = an alcohol + [thioredoxin]-disulfide + H2O. In terms of biological role, thiol-specific peroxidase that catalyzes the reduction of hydrogen peroxide and organic hydroperoxides to water and alcohols, respectively. Plays a role in cell protection against oxidative stress by detoxifying peroxides. This Pyrococcus abyssi (strain GE5 / Orsay) protein is Peroxiredoxin.